Reading from the N-terminus, the 367-residue chain is Phospho-N-acetylmuramoyl-pentapeptide-transferase (367 aa).

Transmembrane regions (helical) follow at residues glycine 34–leucine 54, threonine 78–alanine 98, leucine 101–tyrosine 121, phenylalanine 135–leucine 155, threonine 175–glycine 195, glycine 206–alanine 226, leucine 246–proline 266, isoleucine 270–alanine 290, isoleucine 295–valine 315, and glutamine 344–leucine 364.

Belongs to the glycosyltransferase 4 family. MraY subfamily. It depends on Mg(2+) as a cofactor.

The protein resides in the cell inner membrane. The catalysed reaction is UDP-N-acetyl-alpha-D-muramoyl-L-alanyl-gamma-D-glutamyl-meso-2,6-diaminopimeloyl-D-alanyl-D-alanine + di-trans,octa-cis-undecaprenyl phosphate = di-trans,octa-cis-undecaprenyl diphospho-N-acetyl-alpha-D-muramoyl-L-alanyl-D-glutamyl-meso-2,6-diaminopimeloyl-D-alanyl-D-alanine + UMP. The protein operates within cell wall biogenesis; peptidoglycan biosynthesis. Its function is as follows. Catalyzes the initial step of the lipid cycle reactions in the biosynthesis of the cell wall peptidoglycan: transfers peptidoglycan precursor phospho-MurNAc-pentapeptide from UDP-MurNAc-pentapeptide onto the lipid carrier undecaprenyl phosphate, yielding undecaprenyl-pyrophosphoryl-MurNAc-pentapeptide, known as lipid I. In Bradyrhizobium diazoefficiens (strain JCM 10833 / BCRC 13528 / IAM 13628 / NBRC 14792 / USDA 110), this protein is Phospho-N-acetylmuramoyl-pentapeptide-transferase.